A 501-amino-acid polypeptide reads, in one-letter code: Membrane-bound lytic murein transglycosylase F (501 aa).

An N-terminal signal peptide occupies residues Met-1–Ala-29. The tract at residues Ala-30–Leu-274 is non-LT domain. An LT domain region spans residues Gly-275–Leu-501. Residue Glu-321 is part of the active site.

It in the N-terminal section; belongs to the bacterial solute-binding protein 3 family. This sequence in the C-terminal section; belongs to the transglycosylase Slt family.

It localises to the cell outer membrane. The enzyme catalyses Exolytic cleavage of the (1-&gt;4)-beta-glycosidic linkage between N-acetylmuramic acid (MurNAc) and N-acetylglucosamine (GlcNAc) residues in peptidoglycan, from either the reducing or the non-reducing ends of the peptidoglycan chains, with concomitant formation of a 1,6-anhydrobond in the MurNAc residue.. Functionally, murein-degrading enzyme that degrades murein glycan strands and insoluble, high-molecular weight murein sacculi, with the concomitant formation of a 1,6-anhydromuramoyl product. Lytic transglycosylases (LTs) play an integral role in the metabolism of the peptidoglycan (PG) sacculus. Their lytic action creates space within the PG sacculus to allow for its expansion as well as for the insertion of various structures such as secretion systems and flagella. This chain is Membrane-bound lytic murein transglycosylase F, found in Saccharophagus degradans (strain 2-40 / ATCC 43961 / DSM 17024).